The primary structure comprises 500 residues: Hepatic triacylglycerol lipase (500 aa).

An N-terminal signal peptide occupies residues 1-21 (MENPLCVSIFLFYCILIQSSA). The tract at residues 23–44 (GQSLGPESFGRRSRAAETNKTP) is disordered. N-linked (GlcNAc...) asparagine glycosylation is found at N67 and N78. The active-site Nucleophile is the S168. D194 functions as the Charge relay system in the catalytic mechanism. The essential for determining substrate specificity stretch occupies residues 254 to 277 (CHFLELYKHFAKHGLNAITRTVKC). Residue H279 is the Charge relay system of the active site. Residues 353 to 487 (YHYQFKIRFI…HPAREKTFVR (135 aa)) enclose the PLAT domain. 2 N-linked (GlcNAc...) asparagine glycosylation sites follow: N363 and N398.

Belongs to the AB hydrolase superfamily. Lipase family. Homodimer.

The protein localises to the secreted. It catalyses the reaction a triacylglycerol + H2O = a diacylglycerol + a fatty acid + H(+). The catalysed reaction is a 1-acyl-sn-glycero-3-phosphocholine + H2O = sn-glycerol 3-phosphocholine + a fatty acid + H(+). The enzyme catalyses a 1,2-diacyl-sn-glycero-3-phosphocholine + H2O = a 2-acyl-sn-glycero-3-phosphocholine + a fatty acid + H(+). It carries out the reaction 1,2,3-tri-(9Z-octadecenoyl)-glycerol + H2O = di-(9Z)-octadecenoylglycerol + (9Z)-octadecenoate + H(+). It catalyses the reaction 1,2-di-(9Z-octadecenoyl)-sn-glycero-3-phosphocholine + H2O = (9Z-octadecenoyl)-sn-glycero-3-phosphocholine + (9Z)-octadecenoate + H(+). The catalysed reaction is 1,2,3-tributanoylglycerol + H2O = dibutanoylglycerol + butanoate + H(+). The enzyme catalyses 1,2-dihexadecanoyl-sn-glycero-3-phosphocholine + H2O = hexadecanoyl-sn-glycero-3-phosphocholine + hexadecanoate + H(+). It carries out the reaction 1,2-di-(9Z-octadecenoyl)-sn-glycerol + H2O = 2-(9Z-octadecenoyl)-glycerol + (9Z)-octadecenoate + H(+). It catalyses the reaction 1,2,3-tri-(9Z-octadecenoyl)-glycerol + H2O = 2,3-di-(9Z)-octadecenoyl-sn-glycerol + (9Z)-octadecenoate + H(+). The catalysed reaction is 1-(9Z-octadecenoyl)-sn-glycero-3-phospho-L-serine + H2O = sn-glycero-3-phospho-L-serine + (9Z)-octadecenoate + H(+). The enzyme catalyses 1-hexadecanoyl-sn-glycero-3-phosphocholine + H2O = sn-glycerol 3-phosphocholine + hexadecanoate + H(+). It carries out the reaction 1,3-di-(9Z-octadecenoyl)-glycerol + H2O = 3-(9Z-octadecenoyl)-sn-glycerol + (9Z)-octadecenoate + H(+). Its function is as follows. Catalyzes the hydrolysis of triglycerides and phospholipids present in circulating plasma lipoproteins, including chylomicrons, intermediate density lipoproteins (IDL), low density lipoproteins (LDL) of large size and high density lipoproteins (HDL), releasing free fatty acids (FFA) and smaller lipoprotein particles. Also exhibits lysophospholipase activity. Can hydrolyze both neutral lipid and phospholipid substrates but shows a greater binding affinity for neutral lipid substrates than phospholipid substrates. In native LDL, preferentially hydrolyzes the phosphatidylcholine species containing polyunsaturated fatty acids at sn-2 position. This Bos taurus (Bovine) protein is Hepatic triacylglycerol lipase (LIPC).